The primary structure comprises 154 residues: Probable prefoldin subunit 5 (154 aa).

It belongs to the prefoldin subunit alpha family. Heterohexamer of two PFD-alpha type and four PFD-beta type subunits.

Functionally, binds specifically to cytosolic chaperonin (c-CPN) and transfers target proteins to it. Binds to nascent polypeptide chain and promotes folding in an environment in which there are many competing pathways for nonnative proteins. The sequence is that of Probable prefoldin subunit 5 from Caenorhabditis briggsae.